The sequence spans 620 residues: Guanylate-binding protein 3 (620 aa).

A GTPase domain (Globular) region spans residues 1-304 (MEAPICLVEN…NAINSGTVPC (304 aa)). One can recognise a GB1/RHD3-type G domain in the interval 29–271 (AQPLVVVAIV…FCSYIFTNGK (243 aa)). Residues 39–46 (GLYRTGKS), 61–63 (LGS), and 91–95 (DTEGL) each bind GTP. Coiled coils occupy residues 375-411 (KKLV…SESL) and 477-582 (DGER…TRRK).

The protein belongs to the TRAFAC class dynamin-like GTPase superfamily. GB1/RHD3 GTPase family. GB1 subfamily. As to quaternary structure, heterodimer with other family members, including GBP1, GBP2 and GBP5. Dimerization regulates subcellular location. As to expression, brain, lung, heart, spleen, kidney, liver and intestine.

It localises to the cytoplasm. It is found in the perinuclear region. The protein resides in the golgi apparatus membrane. It carries out the reaction GTP + H2O = GDP + phosphate + H(+). In terms of biological role, interferon (IFN)-inducible GTPase that plays important roles in innate immunity against a diverse range of bacterial, viral and protozoan pathogens. Hydrolyzes GTP very efficiently; GDP rather than GMP is the major reaction product. Following infection, recruited to the pathogen-containing vacuoles or vacuole-escaped bacteria and acts as a positive regulator of inflammasome assembly by promoting the release of inflammasome ligands from bacteria. Acts by promoting lysis of pathogen-containing vacuoles, releasing pathogens into the cytosol. Following pathogen release in the cytosol, promotes recruitment of proteins that mediate bacterial cytolysis, such as Gm12250/Irgb10: this liberates ligands that are detected by inflammasomes, such as lipopolysaccharide (LPS) that activates the non-canonical CASP4/CASP11 inflammasome or double-stranded DNA (dsDNA) that activates the AIM2 inflammasome. May play a role in erythroid differentiation. The protein is Guanylate-binding protein 3 of Mus musculus (Mouse).